The following is a 312-amino-acid chain: DNA-directed RNA polymerase subunit alpha (312 aa).

The alpha N-terminal domain (alpha-NTD) stretch occupies residues 1 to 229 (MLQYQIDRID…ELFQPLATVT (229 aa)). An alpha C-terminal domain (alpha-CTD) region spans residues 240–312 (PSPEAQIPLE…ISIPQSRTSV (73 aa)).

This sequence belongs to the RNA polymerase alpha chain family. In terms of assembly, in cyanobacteria the RNAP catalytic core is composed of 2 alpha, 1 beta, 1 beta', 1 gamma and 1 omega subunit. When a sigma factor is associated with the core the holoenzyme is formed, which can initiate transcription.

It catalyses the reaction RNA(n) + a ribonucleoside 5'-triphosphate = RNA(n+1) + diphosphate. DNA-dependent RNA polymerase catalyzes the transcription of DNA into RNA using the four ribonucleoside triphosphates as substrates. This is DNA-directed RNA polymerase subunit alpha from Prochlorococcus marinus (strain AS9601).